We begin with the raw amino-acid sequence, 71 residues long: MPVVKVKENEPFDVALRRFKRSCEKAGVLSEVRRREHYEKPTSERKRKKAAAVKRHAKKLSRDNARRTRLY.

Residues 34–44 (RREHYEKPTSE) show a composition bias toward basic and acidic residues. The interval 34 to 71 (RREHYEKPTSERKRKKAAAVKRHAKKLSRDNARRTRLY) is disordered. Positions 45 to 59 (RKRKKAAAVKRHAKK) are enriched in basic residues. Positions 60–71 (LSRDNARRTRLY) are enriched in basic and acidic residues.

Belongs to the bacterial ribosomal protein bS21 family.

The protein is Small ribosomal subunit protein bS21 of Idiomarina loihiensis (strain ATCC BAA-735 / DSM 15497 / L2-TR).